We begin with the raw amino-acid sequence, 341 residues long: L-threonine 3-dehydrogenase (341 aa).

Cysteine 38 is a Zn(2+) binding site. Residues threonine 40 and histidine 43 each act as charge relay system in the active site. The Zn(2+) site is built by histidine 63, glutamate 64, cysteine 93, cysteine 96, cysteine 99, and cysteine 107. Residues isoleucine 175, aspartate 195, arginine 200, 262-264 (LGI), and 286-287 (IY) contribute to the NAD(+) site.

This sequence belongs to the zinc-containing alcohol dehydrogenase family. In terms of assembly, homotetramer. It depends on Zn(2+) as a cofactor.

The protein localises to the cytoplasm. It carries out the reaction L-threonine + NAD(+) = (2S)-2-amino-3-oxobutanoate + NADH + H(+). It participates in amino-acid degradation; L-threonine degradation via oxydo-reductase pathway; glycine from L-threonine: step 1/2. Its function is as follows. Catalyzes the NAD(+)-dependent oxidation of L-threonine to 2-amino-3-ketobutyrate. The chain is L-threonine 3-dehydrogenase from Salmonella typhi.